Here is a 436-residue protein sequence, read N- to C-terminus: Elongation factor 1-gamma-A (436 aa).

The GST N-terminal domain occupies 2-87; sequence AGGTLYTYPD…YVGNDELRGT (86 aa). The 134-residue stretch at 88–221 folds into the GST C-terminal domain; that stretch reads TRLHQAQVIQ…KMAQFDAKKF (134 aa). 2 stretches are compositionally biased toward basic and acidic residues: residues 221–249 and 265–278; these read FAEM…EKKK and SEKA…SKDP. Residues 221 to 278 are disordered; sequence FAEMQPKKETPKKEKPAKEPKKEKEEKKKAAPTPAPAPEDDLDESEKALAAEPKSKDP. The EF-1-gamma C-terminal domain occupies 275-436; the sequence is SKDPYAHLPK…KPFNQGKIFK (162 aa).

As to quaternary structure, EF-1 is composed of four subunits: alpha, beta, delta, and gamma. Phosphorylated by CDK1. Post-translationally, the N-terminus is blocked.

Its function is as follows. Probably plays a role in anchoring the complex to other cellular components. In Xenopus laevis (African clawed frog), this protein is Elongation factor 1-gamma-A (eef1g-a).